Reading from the N-terminus, the 297-residue chain is Octopine catabolism/uptake operon regulatory protein OccR (297 aa).

Residues 1–58 (MNLRQVEAFRAVMLTGQMTAAAELMLVTQPAISRLIKDFERATKLQLFERRGNHIIPT) form the HTH lysR-type domain. The segment at residues 18 to 37 (MTAAAELMLVTQPAISRLIK) is a DNA-binding region (H-T-H motif).

This sequence belongs to the LysR transcriptional regulatory family.

Its function is as follows. Positive regulatory protein for the occ operon involved in octopine catabolism and uptake. Also acts as a negative regulator of its expression. The sequence is that of Octopine catabolism/uptake operon regulatory protein OccR (occR) from Rhizobium meliloti (Ensifer meliloti).